Here is a 247-residue protein sequence, read N- to C-terminus: uncharacterized protein (247 aa).

Positions 161–187 are disordered; that stretch reads KEQSDATSDATTSEKNKSPECPKATTE. Basic and acidic residues predominate over residues 172–187; it reads TSEKNKSPECPKATTE.

This is an uncharacterized protein from Mus musculus (Mouse).